A 370-amino-acid chain; its full sequence is Probable trehalose-phosphate phosphatase J (370 aa).

It belongs to the trehalose phosphatase family. It depends on a divalent metal cation as a cofactor.

It catalyses the reaction alpha,alpha-trehalose 6-phosphate + H2O = alpha,alpha-trehalose + phosphate. The protein operates within glycan biosynthesis; trehalose biosynthesis. Its function is as follows. Removes the phosphate from trehalose 6-phosphate to produce free trehalose. Trehalose accumulation in plant may improve abiotic stress tolerance. In Arabidopsis thaliana (Mouse-ear cress), this protein is Probable trehalose-phosphate phosphatase J (TPPJ).